Reading from the N-terminus, the 569-residue chain is Urease subunit alpha (569 aa).

3 residues coordinate Ni(2+): His-136, His-138, and Lys-219. At Lys-219 the chain carries N6-carboxylysine. Residue His-221 coordinates substrate. Ni(2+)-binding residues include His-248 and His-274. The active-site Proton donor is His-322. Residue Asp-362 coordinates Ni(2+).

Belongs to the metallo-dependent hydrolases superfamily. Urease alpha subunit family. Heterotrimer of UreA (gamma), UreB (beta) and UreC (alpha) subunits. Three heterotrimers associate to form the active enzyme. Ni cation serves as cofactor. Carboxylation allows a single lysine to coordinate two nickel ions.

The protein localises to the cytoplasm. The catalysed reaction is urea + 2 H2O + H(+) = hydrogencarbonate + 2 NH4(+). The protein operates within nitrogen metabolism; urea degradation; CO(2) and NH(3) from urea (urease route): step 1/1. This Dinoroseobacter shibae (strain DSM 16493 / NCIMB 14021 / DFL 12) protein is Urease subunit alpha.